The primary structure comprises 370 residues: Cyanuric acid amidohydrolase (370 aa).

Positions 1-106 (MRTTSVGVFK…TVFTRREVER (106 aa)) are RU A. Substrate-binding positions include Arg-54 and 85-86 (SG). Positions 115–251 (RLSIGMAHTR…NVVIVLGNSA (137 aa)) are RU B. Lys-165 is an active-site residue. Substrate-binding positions include Arg-197 and 234–235 (SA). Catalysis depends on Ser-234, which acts as the Nucleophile. The RU C stretch occupies residues 257 to 370 (FEIGHAVMND…PVAVIARLSD (114 aa)). Mg(2+) is bound at residue Glu-302. Substrate-binding positions include Arg-329 and 348-349 (SG). The Mg(2+) site is built by Ala-351, Gln-354, Gly-355, Pro-356, and Gly-359.

The protein belongs to the cyclic amide hydrolase (CyAH) family. In terms of assembly, homotetramer.

The catalysed reaction is cyanurate + H2O = 1-carboxybiuret + H(+). It functions in the pathway xenobiotic degradation; atrazine degradation; biuret from cyanurate: step 1/1. Its activity is regulated as follows. Inhibited by barbituric acid. Its function is as follows. Responsible for the hydrolysis of cyanuric acid, an intermediate formed during catabolism of s-triazine based compounds in herbicides such as atrazine and polymers such as melamine. Catalyzes the hydrolytic opening of the s-triazine ring of cyanuric acid (2,4,6-trihydroxy-s-triazine) to yield carbon dioxide and carboxybiuret, which spontaneously decarboxylates to biuret. This Bradyrhizobium diazoefficiens (strain JCM 10833 / BCRC 13528 / IAM 13628 / NBRC 14792 / USDA 110) protein is Cyanuric acid amidohydrolase.